We begin with the raw amino-acid sequence, 1223 residues long: A disintegrin and metalloproteinase with thrombospondin motifs 14 (1223 aa).

A signal peptide spans M1 to A22. The propeptide occupies G23–R252. A glycan (N-linked (GlcNAc...) asparagine) is linked at N109. The Peptidase M12B domain occupies Y259 to P460. 3 disulfides stabilise this stretch: C336/C382, C376/C455, and C415/C441. Position 398 (H398) interacts with Zn(2+). Residue E399 is part of the active site. Residues H402 and H408 each contribute to the Zn(2+) site. Residues F461 to Q551 enclose the Disintegrin domain. N-linked (GlcNAc...) asparagine glycosylation occurs at N475. 7 disulfides stabilise this stretch: C482–C507, C493–C516, C502–C535, C529–C540, C564–C601, C568–C606, and C579–C591. Residues D552–P607 enclose the TSP type-1 1 domain. The spacer stretch occupies residues L730–M846. TSP type-1 domains are found at residues D847–S907, Q908–P967, and C968–G1022. N-linked (GlcNAc...) asparagine glycosylation occurs at N941. Intrachain disulfides connect C980–C1016, C984–C1021, and C995–C1005. N-linked (GlcNAc...) asparagine glycosylation is present at N1027. Residues S1059–A1097 enclose the PLAC domain. Residues P1100 to T1223 form a disordered region. Residues N1101–Q1125 are compositionally biased toward pro residues. Basic and acidic residues predominate over residues P1199–H1211.

In terms of processing, the precursor is cleaved by a furin endopeptidase. Glycosylated. Can be O-fucosylated by POFUT2 on a serine or a threonine residue found within the consensus sequence C1-X(2)-(S/T)-C2-G of the TSP type-1 repeat domains where C1 and C2 are the first and second cysteine residue of the repeat, respectively. Fucosylated repeats can then be further glycosylated by the addition of a beta-1,3-glucose residue by the glucosyltransferase, B3GALTL. Fucosylation mediates the efficient secretion of ADAMTS family members. Can also be C-glycosylated with one or two mannose molecules on tryptophan residues within the consensus sequence W-X-X-W of the TPRs, and N-glycosylated. These other glycosylations can also facilitate secretion. Expressed in retina and at low levels in brain, lung and placenta. High expression in fetal tissues.

It is found in the secreted. The protein resides in the extracellular space. Its subcellular location is the extracellular matrix. Functionally, has aminoprocollagen type I processing activity in the absence of ADAMTS2. Seems to be synthesized as a latent enzyme that requires activation to display aminoprocollagen peptidase activity. Cleaves lysyl oxidase LOX at a site downstream of its propeptide cleavage site to produce a short LOX form. The sequence is that of A disintegrin and metalloproteinase with thrombospondin motifs 14 (ADAMTS14) from Homo sapiens (Human).